The sequence spans 170 residues: Protein Rex (170 aa).

Residues 1–16 show a composition bias toward basic residues; the sequence is MPKTRRQRTRRARRNR. Disordered regions lie at residues 1 to 27 and 69 to 170; these read MPKTRRQRTRRARRNRPPTPWPISQDL and VQST…GEKP. The Nuclear localization signal, and RNA-binding (RxRE) motif lies at 2 to 19; sequence PKTRRQRTRRARRNRPPT. The interval 57–71 is homomultimerization; sequence PPAYIDMPSWPPVQS. Low complexity predominate over residues 82–95; it reads ALSALLSNTLSLAS. The Nuclear export signal motif lies at 83–94; the sequence is LSALLSNTLSLA. The segment at 124-132 is homomultimerization; that stretch reads PSFNQCEST. Residues 143–160 are compositionally biased toward low complexity; sequence PSGISSPPSPSPNLASVP. A phosphoserine; by host mark is found at S151 and S153. Over residues 161 to 170 the composition is skewed to polar residues; sequence KTSTPPGEKP.

The protein belongs to the deltaretrovirus Rex protein family. Homomultimer. In terms of processing, phosphorylation is essential for RNA-binding and function.

The protein localises to the host nucleus. It localises to the host nucleolus. The protein resides in the host cytoplasm. Rex escorts unspliced gag-pro-pol and singly spliced env mRNAs out of the nucleus of infected cells. These mRNAs carry a recognition sequence called Rex responsive element (RxRE or XRE) located at the 3' region of the long terminal repeat (LTR). This function is essential since most HTLV proteins are translated from unspliced or partially spliced pre-mRNAs that cannot exit the nucleus by the pathway used by fully processed cellular mRNAs. The sequence is that of Protein Rex from Human T-cell leukemia virus 2 (HTLV-2).